The sequence spans 257 residues: Flap endonuclease Xni (257 aa).

Mg(2+) is bound at residue aspartate 109. The 5'-3' exonuclease domain occupies 165–254; sequence VKPEQLADYW…GFNLQDIRYE (90 aa). Leucine 176, proline 185, isoleucine 187, and isoleucine 190 together coordinate K(+). The interval 189–194 is interaction with DNA; it reads GIGPKA.

This sequence belongs to the Xni family. Mg(2+) is required as a cofactor. It depends on K(+) as a cofactor.

Its function is as follows. Has flap endonuclease activity. During DNA replication, flap endonucleases cleave the 5'-overhanging flap structure that is generated by displacement synthesis when DNA polymerase encounters the 5'-end of a downstream Okazaki fragment. The sequence is that of Flap endonuclease Xni from Vibrio atlanticus (strain LGP32) (Vibrio splendidus (strain Mel32)).